The primary structure comprises 110 residues: Insulin (110 aa).

The signal sequence occupies residues methionine 1 to alanine 24. 3 disulfide bridges follow: cysteine 31–cysteine 96, cysteine 43–cysteine 109, and cysteine 95–cysteine 100. Residues glutamate 57–glutamine 87 constitute a propeptide, c peptide.

This sequence belongs to the insulin family. Heterodimer of a B chain and an A chain linked by two disulfide bonds.

It is found in the secreted. Its function is as follows. Insulin decreases blood glucose concentration. It increases cell permeability to monosaccharides, amino acids and fatty acids. It accelerates glycolysis, the pentose phosphate cycle, and glycogen synthesis in liver. This chain is Insulin (INS), found in Gorilla gorilla gorilla (Western lowland gorilla).